We begin with the raw amino-acid sequence, 578 residues long: Tetratricopeptide repeat protein 39A (578 aa).

TPR repeat units lie at residues 280-313, 470-503, and 511-544; these read AIFL…QQHW, CLVK…EKKI, and PNAL…YKNY.

This sequence belongs to the TTC39 family.

In Mus musculus (Mouse), this protein is Tetratricopeptide repeat protein 39A (Ttc39a).